The sequence spans 119 residues: Odin profilin (119 aa).

It belongs to the Asgard profilin family.

It is found in the cytoplasm. Its subcellular location is the cytoskeleton. With respect to regulation, inhibition of rabbit actin polymerization is reduced by phosphatidylinositol-(4,5)-P2(1,2-dipalmitoyl), a soluble form of the phospholipid phosphatidylinositol, suggesting an unknown lipid might regulate actin-profilin interaction in vivo. Its function is as follows. Binds to actin and affects the structure of the cytoskeleton. At high concentrations inhibits spontaneous rabbit actin nucleation. This strongly suggests this archaea has a profilin-regulated actin system, and actin-type genes can be identified in this organism. This Odinarchaeota yellowstonii (strain LCB_4) protein is Odin profilin.